The chain runs to 110 residues: Flagellar hook-basal body complex protein FliE (110 aa).

Belongs to the FliE family.

It localises to the bacterial flagellum basal body. The sequence is that of Flagellar hook-basal body complex protein FliE from Pseudomonas putida (strain W619).